The following is a 247-amino-acid chain: NAD(P)H-quinone oxidoreductase subunit K (247 aa).

Positions 63, 64, 128, and 159 each coordinate [4Fe-4S] cluster.

The protein belongs to the complex I 20 kDa subunit family. NDH-1 can be composed of about 15 different subunits; different subcomplexes with different compositions have been identified which probably have different functions. The cofactor is [4Fe-4S] cluster.

It is found in the cellular thylakoid membrane. The enzyme catalyses a plastoquinone + NADH + (n+1) H(+)(in) = a plastoquinol + NAD(+) + n H(+)(out). It catalyses the reaction a plastoquinone + NADPH + (n+1) H(+)(in) = a plastoquinol + NADP(+) + n H(+)(out). NDH-1 shuttles electrons from an unknown electron donor, via FMN and iron-sulfur (Fe-S) centers, to quinones in the respiratory and/or the photosynthetic chain. The immediate electron acceptor for the enzyme in this species is believed to be plastoquinone. Couples the redox reaction to proton translocation, and thus conserves the redox energy in a proton gradient. Cyanobacterial NDH-1 also plays a role in inorganic carbon-concentration. The polypeptide is NAD(P)H-quinone oxidoreductase subunit K (Microcystis aeruginosa (strain NIES-843 / IAM M-2473)).